Here is a 273-residue protein sequence, read N- to C-terminus: F-actin-capping protein subunit alpha (273 aa).

This sequence belongs to the F-actin-capping protein alpha subunit family. Heterodimer of an alpha and a beta subunit.

The protein localises to the cytoplasm. It is found in the cytoskeleton. Its function is as follows. F-actin-capping proteins bind in a Ca(2+)-independent manner to the fast growing ends of actin filaments (barbed end) thereby blocking the exchange of subunits at these ends. Unlike other capping proteins (such as gelsolin and severin), these proteins do not sever actin filaments. The polypeptide is F-actin-capping protein subunit alpha (CAP1) (Gibberella zeae (strain ATCC MYA-4620 / CBS 123657 / FGSC 9075 / NRRL 31084 / PH-1) (Wheat head blight fungus)).